The chain runs to 355 residues: 3-dehydroquinate synthase (355 aa).

Residues 98–102 (GVIGD), 122–123 (TT), Lys135, Lys144, and 162–165 (TLNT) contribute to the NAD(+) site. The Zn(2+) site is built by Glu177, His240, and His257.

The protein belongs to the sugar phosphate cyclases superfamily. Dehydroquinate synthase family. The cofactor is Co(2+). Requires Zn(2+) as cofactor. NAD(+) serves as cofactor.

It localises to the cytoplasm. The enzyme catalyses 7-phospho-2-dehydro-3-deoxy-D-arabino-heptonate = 3-dehydroquinate + phosphate. Its pathway is metabolic intermediate biosynthesis; chorismate biosynthesis; chorismate from D-erythrose 4-phosphate and phosphoenolpyruvate: step 2/7. In terms of biological role, catalyzes the conversion of 3-deoxy-D-arabino-heptulosonate 7-phosphate (DAHP) to dehydroquinate (DHQ). The chain is 3-dehydroquinate synthase from Dictyoglomus thermophilum (strain ATCC 35947 / DSM 3960 / H-6-12).